The primary structure comprises 62 residues: MVCIHTENQNQGDFYPFVLLEISVLHESPLGHLRYRLTDVPPQPNSPGEIYCFYINCIMNRR.

The protein belongs to the ART2/RRT15 family.

Functionally, involved in modulation of rDNA transcription. The polypeptide is Regulator of rDNA transcription protein 15 (RRT15) (Saccharomyces cerevisiae (strain ATCC 204508 / S288c) (Baker's yeast)).